A 496-amino-acid chain; its full sequence is Cobyric acid synthase (496 aa).

In terms of domain architecture, GATase cobBQ-type spans 264 to 458 (HTRIAVVAYP…LHGLFEDAAV (195 aa)). The active-site Nucleophile is the cysteine 345. Histidine 450 is an active-site residue.

The protein belongs to the CobB/CobQ family. CobQ subfamily.

It participates in cofactor biosynthesis; adenosylcobalamin biosynthesis. Its function is as follows. Catalyzes amidations at positions B, D, E, and G on adenosylcobyrinic A,C-diamide. NH(2) groups are provided by glutamine, and one molecule of ATP is hydrogenolyzed for each amidation. The protein is Cobyric acid synthase of Acidovorax ebreus (strain TPSY) (Diaphorobacter sp. (strain TPSY)).